The following is a 208-amino-acid chain: Putative chemokine-related protein FP248 (208 aa).

The N-terminal stretch at 1 to 23 is a signal peptide; it reads MGTGGSLLCGCSLVLSCLCPSAS. N-linked (GlcNAc...) asparagine glycosylation is present at N29.

It localises to the secreted. In Homo sapiens (Human), this protein is Putative chemokine-related protein FP248.